Reading from the N-terminus, the 609-residue chain is Numb-like protein (609 aa).

Disordered regions lie at residues 1–68 (MSRS…QWQA), 223–283 (GSFR…PVAA), 372–421 (ASAG…EEVS), 434–464 (QQQQ…QPFP), and 537–609 (AGAF…EIEL). A compositionally biased stretch (pro residues) spans 19–29 (PPAPCGAPGPP). In terms of domain architecture, PID spans 74-223 (RKGTCSFPVR…ASRTSFAREG (150 aa)). Residues serine 224 and serine 228 each carry the phosphoserine modification. Basic and acidic residues predominate over residues 233–245 (PAEREAPDKKKAE). Residues 246–259 (AAAAPTVAPGPAQP) show a composition bias toward low complexity. Position 263 is a phosphoserine (serine 263). Phosphothreonine is present on threonine 279. The segment covering 409–418 (TPSEAERWLE) has biased composition (basic and acidic residues). Serine 411 is subject to Phosphoserine. The span at 434–446 (QQQQQQQQQQQQQ) shows a compositional bias: low complexity. Pro residues-rich tracts occupy residues 454 to 464 (PTMPPALQPFP) and 558 to 573 (NGAP…PAPE).

Interacts (via PTB domain) with MAP3K7IP2 (via C-terminal). Interacts (via C-terminal) with TRAF6 (via TRAF domains). Associates with EPS15 and NOTCH1.

Its subcellular location is the cytoplasm. Its function is as follows. Plays a role in the process of neurogenesis. Required throughout embryonic neurogenesis to maintain neural progenitor cells, also called radial glial cells (RGCs), by allowing their daughter cells to choose progenitor over neuronal cell fate. Not required for the proliferation of neural progenitor cells before the onset of embryonic neurogenesis. Also required postnatally in the subventricular zone (SVZ) neurogenesis by regulating SVZ neuroblasts survival and ependymal wall integrity. Negative regulator of NF-kappa-B signaling pathway. The inhibition of NF-kappa-B activation is mediated at least in part, by preventing MAP3K7IP2 to interact with polyubiquitin chains of TRAF6 and RIPK1 and by stimulating the 'Lys-48'-linked polyubiquitination and degradation of TRAF6 in cortical neurons. In Homo sapiens (Human), this protein is Numb-like protein (NUMBL).